The following is an 87-amino-acid chain: Small archaeal modifier protein 1 (87 aa).

Gly-87 is modified (1-thioglycine; alternate). Glycyl adenylate; alternate is present on Gly-87. A Glycyl lysine isopeptide (Gly-Lys) (interchain with K-? in acceptor proteins); alternate cross-link involves residue Gly-87.

In terms of processing, the C-terminal glycine is likely acyl-adenylated (-COAMP) by UbaA, and also probably thiocarboxylated (-COSH) to function in sulfur transfer.

Functions as a protein modifier covalently attached to lysine residues of substrate proteins, as well as a sulfur carrier in molybdenum cofactor (MoCo) biosynthesis. The protein modification process is termed sampylation and involves the formation of an isopeptide bond between the SAMP1 C-terminal glycine carboxylate and the epsilon-amino group of lysine residues on target proteins. May serve as a proteolytic signal in the cell to target proteins for degradation by proteasomes. The chain is Small archaeal modifier protein 1 (samp1) from Haloferax volcanii (strain ATCC 29605 / DSM 3757 / JCM 8879 / NBRC 14742 / NCIMB 2012 / VKM B-1768 / DS2) (Halobacterium volcanii).